Here is a 344-residue protein sequence, read N- to C-terminus: Methionine import ATP-binding protein MetN (344 aa).

In terms of domain architecture, ABC transporter spans Ile-2–Ile-241. Gly-38–Ser-45 is an ATP binding site.

This sequence belongs to the ABC transporter superfamily. Methionine importer (TC 3.A.1.24) family. The complex is composed of two ATP-binding proteins (MetN), two transmembrane proteins (MetI) and a solute-binding protein (MetQ).

The protein resides in the cell inner membrane. The enzyme catalyses L-methionine(out) + ATP + H2O = L-methionine(in) + ADP + phosphate + H(+). It catalyses the reaction D-methionine(out) + ATP + H2O = D-methionine(in) + ADP + phosphate + H(+). Part of the ABC transporter complex MetNIQ involved in methionine import. Responsible for energy coupling to the transport system. The polypeptide is Methionine import ATP-binding protein MetN (Pasteurella multocida (strain Pm70)).